The chain runs to 256 residues: Uridylate kinase (256 aa).

10–13 (KLSG) is a binding site for ATP. Gly-52 provides a ligand contact to UMP. ATP contacts are provided by Gly-53 and Arg-57. UMP contacts are provided by residues Asp-72 and 134 to 141 (NGQPFLTT). Residues Tyr-168 and Asp-171 each contribute to the ATP site.

This sequence belongs to the UMP kinase family. As to quaternary structure, homohexamer.

The protein localises to the cytoplasm. It carries out the reaction UMP + ATP = UDP + ADP. Its pathway is pyrimidine metabolism; CTP biosynthesis via de novo pathway; UDP from UMP (UMPK route): step 1/1. Its activity is regulated as follows. Inhibited by UTP. In terms of biological role, catalyzes the reversible phosphorylation of UMP to UDP. The chain is Uridylate kinase from Frankia alni (strain DSM 45986 / CECT 9034 / ACN14a).